Reading from the N-terminus, the 184-residue chain is MHPPVPSLTDTTLVADLNARLRDVPDFPKPGIVFKDITPVLADPRLFGRVIDAMSAPFRGQHVTKVVGVEARGFLLGAPIALALNAGFVPARKPGKLPHRSVVERYSLEYGSDGVEMHEDAILQGERVLVVDDVLATGGTAEATARLVSRLGGELVGFCFLLSLDFLEGPNRLGRERVTTLLTF.

Belongs to the purine/pyrimidine phosphoribosyltransferase family. Homodimer.

It localises to the cytoplasm. It catalyses the reaction AMP + diphosphate = 5-phospho-alpha-D-ribose 1-diphosphate + adenine. Its pathway is purine metabolism; AMP biosynthesis via salvage pathway; AMP from adenine: step 1/1. Catalyzes a salvage reaction resulting in the formation of AMP, that is energically less costly than de novo synthesis. In Myxococcus xanthus (strain DK1622), this protein is Adenine phosphoribosyltransferase.